We begin with the raw amino-acid sequence, 220 residues long: Peptide methionine sulfoxide reductase MsrA (220 aa).

Residue Cys54 is part of the active site.

It belongs to the MsrA Met sulfoxide reductase family.

The catalysed reaction is L-methionyl-[protein] + [thioredoxin]-disulfide + H2O = L-methionyl-(S)-S-oxide-[protein] + [thioredoxin]-dithiol. It carries out the reaction [thioredoxin]-disulfide + L-methionine + H2O = L-methionine (S)-S-oxide + [thioredoxin]-dithiol. Its function is as follows. Has an important function as a repair enzyme for proteins that have been inactivated by oxidation. Catalyzes the reversible oxidation-reduction of methionine sulfoxide in proteins to methionine. The protein is Peptide methionine sulfoxide reductase MsrA of Salinispora arenicola (strain CNS-205).